A 348-amino-acid polypeptide reads, in one-letter code: PDZ and LIM domain protein 2 (348 aa).

The PDZ domain maps to 1–84; it reads MALTVDVVGP…PLRLQLDRPQ (84 aa). Residues 67-139 are disordered; the sequence is SKIRQSPSPL…PPTSPQAPTG (73 aa). Positions 103-118 are enriched in polar residues; that stretch reads RFQSSRRTHTDSQASL. Phosphoserine is present on residues Ser117, Ser119, and Ser124. A phosphothreonine mark is found at Thr128 and Thr132. 8 positions are modified to phosphoserine: Ser133, Ser153, Ser191, Ser197, Ser198, Ser202, Ser209, and Ser262. Positions 165–202 are disordered; that stretch reads GGRRGSRQASLSPAGDSAVLVLPPPPSPGARSSSSRLS. Over residues 193–202 the composition is skewed to low complexity; sequence GARSSSSRLS. The tract at residues 249 to 275 is disordered; the sequence is ERGGTPAYLPSSLSPQSSLPTSRALAS. Residues 257–270 show a composition bias toward low complexity; it reads LPSSLSPQSSLPTS. The LIM zinc-binding domain occupies 280–340; the sequence is HTCEKCNTSI…EKHARQRYSA (61 aa).

Interacts with alpha-actinins ACTN1 and ACTN4, FLNA and MYH9. Interacts (via LIM zinc-binding domain) with MKRN2.

It is found in the cytoplasm. It localises to the cytoskeleton. Its function is as follows. Probable adapter protein located at the actin cytoskeleton that promotes cell attachment. Necessary for the migratory capacity of epithelial cells. Overexpression enhances cell adhesion to collagen and fibronectin and suppresses anchorage independent growth. May contribute to tumor cell migratory capacity. The chain is PDZ and LIM domain protein 2 (PDLIM2) from Bos taurus (Bovine).